A 107-amino-acid polypeptide reads, in one-letter code: MNTTDSSLLADIREVNLSYLLLAQRMLRQDHAASMFRLGFSTEVADILMRLSPAQLVKLASSSSVLCRFRFDDYGLLSALTQDVLGGALQQAHATILLAKQPVEEIA.

It belongs to the FlhD family. As to quaternary structure, homodimer; disulfide-linked. Forms a heterohexamer composed of two FlhC and four FlhD subunits. Each FlhC binds a FlhD dimer, forming a heterotrimer, and a hexamer assembles by dimerization of two heterotrimers.

Its subcellular location is the cytoplasm. In terms of biological role, functions in complex with FlhC as a master transcriptional regulator that regulates transcription of several flagellar and non-flagellar operons by binding to their promoter region. Activates expression of class 2 flagellar genes, including fliA, which is a flagellum-specific sigma factor that turns on the class 3 genes. Also regulates genes whose products function in a variety of physiological pathways. This chain is Flagellar transcriptional regulator FlhD, found in Bordetella avium (strain 197N).